The sequence spans 430 residues: MTTLTLNTSLLSSRRILAAFSGGLDSTVLLHQLVLWRERHPDVTLRAIHIHHGLSPHADSWVRHCETVCERWQVPLVVERVTLADNGLGIEAHAREARYRAFAQTLLPGEVLATAQHLDDQCETFLLALKRGSGPAGLSAMGERSPFAGTLLLRPLLRETRKTLEQWAVRHGLCWIEDESNQDDAYDRNFLRLRALPLLQQRWPHFPAAVARSATLCAEQERLLDELLASDLTDCITAEGTLRLSPLMSMSDVRRAAILRRWLAMRNAPMPSRDALERIWQEVALARDDASPCLRFGDREIRRYQSQLWWIKSVAGQHETTVAWPVWQTPLALPAGLGTVQLVPGGELRRPREEESVSIRFKAPGVLHIVGRNGGRKLKKIWQEQGIPPWRRDTTPLLFYGETLIAAAGVFVTREGAAEDKEGVSLVWHA.

Residue 21-26 (SGGLDS) coordinates ATP.

This sequence belongs to the tRNA(Ile)-lysidine synthase family.

It localises to the cytoplasm. The enzyme catalyses cytidine(34) in tRNA(Ile2) + L-lysine + ATP = lysidine(34) in tRNA(Ile2) + AMP + diphosphate + H(+). Its function is as follows. Ligates lysine onto the cytidine present at position 34 of the AUA codon-specific tRNA(Ile) that contains the anticodon CAU, in an ATP-dependent manner. Cytidine is converted to lysidine, thus changing the amino acid specificity of the tRNA from methionine to isoleucine. This chain is tRNA(Ile)-lysidine synthase, found in Salmonella paratyphi B (strain ATCC BAA-1250 / SPB7).